Reading from the N-terminus, the 109-residue chain is Oncomodulin-2 (109 aa).

EF-hand domains lie at 39 to 74 (MSAS…FESG) and 78 to 109 (LTES…MVHS). Positions 52, 54, 56, 58, 63, 91, 93, 95, 97, and 102 each coordinate Ca(2+).

This sequence belongs to the parvalbumin family.

The polypeptide is Oncomodulin-2 (OCM2) (Homo sapiens (Human)).